Consider the following 149-residue polypeptide: MYQTLQAAYAAKRKARRFAVQGIYEWQMSHNPVHEIEARTRAENAMHKVDLNYYHELLTQVIAQHEDLDALLIPVLDREIDALDGVELATLRLGAYELRDHLEIPYRVVLDEAIELAKHFGGADSHKYINGVLDRLSSTLRSAEKQQAK.

The protein belongs to the NusB family.

Involved in transcription antitermination. Required for transcription of ribosomal RNA (rRNA) genes. Binds specifically to the boxA antiterminator sequence of the ribosomal RNA (rrn) operons. The sequence is that of Transcription antitermination protein NusB from Acinetobacter baumannii (strain SDF).